A 762-amino-acid polypeptide reads, in one-letter code: Protein PHTF1 (762 aa).

In terms of domain architecture, PHTF spans 6 to 150 (RDAISWYQKK…VHCQIVSTQI (145 aa)). Transmembrane regions (helical) follow at residues 77-97 (GLVR…VTSL), 99-119 (IFVW…LYLM), and 121-141 (PIVN…MGTV). The segment at 152–184 (RPSGNNGNRRRRKLRKTVNGDGSRENGNNSSDK) is disordered. N-linked (GlcNAc...) asparagine glycosylation is found at Asn179 and Asn180. Ser272, Ser276, Ser277, Ser334, and Ser336 each carry phosphoserine. Disordered stretches follow at residues 344–380 (SAAF…ETED) and 393–415 (RSSV…TKRD). Residues 348 to 361 (SQGSRSGVSGGSRS) are compositionally biased toward low complexity. An N-linked (GlcNAc...) asparagine glycan is attached at Asn363. The segment covering 365-376 (SRRDSESTRHDS) has biased composition (basic and acidic residues). A glycan (N-linked (GlcNAc...) asparagine) is linked at Asn431. 4 helical membrane passes run 473–493 (GVGY…FPFL), 512–532 (EILT…LSII), 611–631 (VVVS…CAQV), and 645–665 (WEFL…ASLG). Asn674 and Asn733 each carry an N-linked (GlcNAc...) asparagine glycan. Residues 737-757 (VVILSAVSGVISDLLGFNIRL) traverse the membrane as a helical segment.

In terms of assembly, interacts with FEM1B. Widely expressed with highest levels in testis.

It localises to the endoplasmic reticulum membrane. Its subcellular location is the golgi apparatus. The protein localises to the cis-Golgi network membrane. The chain is Protein PHTF1 from Homo sapiens (Human).